The primary structure comprises 427 residues: Serine hydroxymethyltransferase (427 aa).

(6S)-5,6,7,8-tetrahydrofolate is bound by residues leucine 122 and 126 to 128 (GHL). Position 231 is an N6-(pyridoxal phosphate)lysine (lysine 231).

It belongs to the SHMT family. In terms of assembly, homodimer. It depends on pyridoxal 5'-phosphate as a cofactor.

It is found in the cytoplasm. It catalyses the reaction (6R)-5,10-methylene-5,6,7,8-tetrahydrofolate + glycine + H2O = (6S)-5,6,7,8-tetrahydrofolate + L-serine. The protein operates within one-carbon metabolism; tetrahydrofolate interconversion. It functions in the pathway amino-acid biosynthesis; glycine biosynthesis; glycine from L-serine: step 1/1. Functionally, catalyzes the reversible interconversion of serine and glycine with tetrahydrofolate (THF) serving as the one-carbon carrier. This reaction serves as the major source of one-carbon groups required for the biosynthesis of purines, thymidylate, methionine, and other important biomolecules. Also exhibits THF-independent aldolase activity toward beta-hydroxyamino acids, producing glycine and aldehydes, via a retro-aldol mechanism. The polypeptide is Serine hydroxymethyltransferase (Acidobacterium capsulatum (strain ATCC 51196 / DSM 11244 / BCRC 80197 / JCM 7670 / NBRC 15755 / NCIMB 13165 / 161)).